Here is an 83-residue protein sequence, read N- to C-terminus: uncharacterized protein (83 aa).

The next 3 helical transmembrane spans lie at 4–24, 32–52, and 54–74; these read AILS…GVLM, IGNI…LKAF, and YYDL…IIIG.

Its subcellular location is the cell membrane. This is an uncharacterized protein from Methanocaldococcus jannaschii (strain ATCC 43067 / DSM 2661 / JAL-1 / JCM 10045 / NBRC 100440) (Methanococcus jannaschii).